A 147-amino-acid chain; its full sequence is MEKYNREEFEEVIVDIGRVTKVVKGGRRFRFTALVVVGDKKGRVGFGFGKAKEVPDAMKKAVDDAFKNIVEVKLKGSTIPHDIEVKFNASRILLKPASEGTGVIAGGGARPVVELAGIKNILTKSLGSNNSANVVRATIKALSMLKG.

The S5 DRBM domain occupies 9-72; that stretch reads FEEVIVDIGR…DDAFKNIVEV (64 aa).

This sequence belongs to the universal ribosomal protein uS5 family. Part of the 30S ribosomal subunit. Contacts proteins S4 and S8.

Functionally, with S4 and S12 plays an important role in translational accuracy. Its function is as follows. Located at the back of the 30S subunit body where it stabilizes the conformation of the head with respect to the body. This Campylobacter fetus subsp. fetus (strain 82-40) protein is Small ribosomal subunit protein uS5.